Reading from the N-terminus, the 48-residue chain is Photosystem II reaction center protein K (48 aa).

Positions 1–11 (MFLFNLEQSIG) are excised as a propeptide. Residues 23–43 (LVDVLPIIPLLFLLLAFVWQA) traverse the membrane as a helical segment.

The protein belongs to the PsbK family. PSII is composed of 1 copy each of membrane proteins PsbA, PsbB, PsbC, PsbD, PsbE, PsbF, PsbH, PsbI, PsbJ, PsbK, PsbL, PsbM, PsbT, PsbX, PsbY, PsbZ, Psb30/Ycf12, at least 3 peripheral proteins of the oxygen-evolving complex and a large number of cofactors. It forms dimeric complexes.

It localises to the plastid. Its subcellular location is the chloroplast thylakoid membrane. In terms of biological role, one of the components of the core complex of photosystem II (PSII). PSII is a light-driven water:plastoquinone oxidoreductase that uses light energy to abstract electrons from H(2)O, generating O(2) and a proton gradient subsequently used for ATP formation. It consists of a core antenna complex that captures photons, and an electron transfer chain that converts photonic excitation into a charge separation. This chain is Photosystem II reaction center protein K, found in Lepocinclis buetschlii.